The following is a 429-amino-acid chain: Enolase (429 aa).

Residue Q163 coordinates (2R)-2-phosphoglycerate. E205 (proton donor) is an active-site residue. 3 residues coordinate Mg(2+): D242, E285, and D312. (2R)-2-phosphoglycerate is bound by residues K337, R366, S367, and K388. The Proton acceptor role is filled by K337.

The protein belongs to the enolase family. Requires Mg(2+) as cofactor.

The protein resides in the cytoplasm. Its subcellular location is the secreted. It localises to the cell surface. The catalysed reaction is (2R)-2-phosphoglycerate = phosphoenolpyruvate + H2O. The protein operates within carbohydrate degradation; glycolysis; pyruvate from D-glyceraldehyde 3-phosphate: step 4/5. Its function is as follows. Catalyzes the reversible conversion of 2-phosphoglycerate (2-PG) into phosphoenolpyruvate (PEP). It is essential for the degradation of carbohydrates via glycolysis. In Aromatoleum aromaticum (strain DSM 19018 / LMG 30748 / EbN1) (Azoarcus sp. (strain EbN1)), this protein is Enolase.